Reading from the N-terminus, the 247-residue chain is Triosephosphate isomerase (247 aa).

Residue 8–10 coordinates substrate; sequence NWK. The Electrophile role is filled by histidine 95. The active-site Proton acceptor is glutamate 162. Positions 168 and 207 each coordinate substrate.

The protein belongs to the triosephosphate isomerase family. Homodimer.

It localises to the cytoplasm. It catalyses the reaction D-glyceraldehyde 3-phosphate = dihydroxyacetone phosphate. It participates in carbohydrate biosynthesis; gluconeogenesis. The protein operates within carbohydrate degradation; glycolysis; D-glyceraldehyde 3-phosphate from glycerone phosphate: step 1/1. Its function is as follows. Involved in the gluconeogenesis. Catalyzes stereospecifically the conversion of dihydroxyacetone phosphate (DHAP) to D-glyceraldehyde-3-phosphate (G3P). This chain is Triosephosphate isomerase, found in Gluconacetobacter diazotrophicus (strain ATCC 49037 / DSM 5601 / CCUG 37298 / CIP 103539 / LMG 7603 / PAl5).